The following is a 419-amino-acid chain: Methionine aminopeptidase 2 (419 aa).

The interval 1–69 (MSTNSSNPNE…KITAIDNSYP (69 aa)) is disordered. Basic and acidic residues predominate over residues 11 to 29 (VMEKVQDLKIDDSKPKVDS). Residues 30–41 (EEQPEAESDGES) show a composition bias toward acidic residues. Residues 48–61 (KKKKKKKSKKKKKI) are compositionally biased toward basic residues. H172 lines the substrate pocket. The a divalent metal cation site is built by D192, D203, and H272. H280 provides a ligand contact to substrate. A divalent metal cation contacts are provided by E305 and E400.

This sequence belongs to the peptidase M24A family. Methionine aminopeptidase eukaryotic type 2 subfamily. Co(2+) serves as cofactor. Requires Zn(2+) as cofactor. The cofactor is Mn(2+). It depends on Fe(2+) as a cofactor.

It is found in the cytoplasm. It catalyses the reaction Release of N-terminal amino acids, preferentially methionine, from peptides and arylamides.. Functionally, cotranslationally removes the N-terminal methionine from nascent proteins. The N-terminal methionine is often cleaved when the second residue in the primary sequence is small and uncharged (Met-Ala-, Cys, Gly, Pro, Ser, Thr, or Val). This Debaryomyces hansenii (strain ATCC 36239 / CBS 767 / BCRC 21394 / JCM 1990 / NBRC 0083 / IGC 2968) (Yeast) protein is Methionine aminopeptidase 2.